The sequence spans 273 residues: Large ribosomal subunit protein uL2 (273 aa).

Disordered regions lie at residues 28 to 55 (TPEKSLTRGKPAKAGRGAGGRISVRHRG) and 222 to 273 (GMAM…SKRK). The segment covering 255 to 273 (YKTRKKRRVSDRFIVSKRK) has biased composition (basic residues).

Belongs to the universal ribosomal protein uL2 family. As to quaternary structure, part of the 50S ribosomal subunit. Forms a bridge to the 30S subunit in the 70S ribosome.

One of the primary rRNA binding proteins. Required for association of the 30S and 50S subunits to form the 70S ribosome, for tRNA binding and peptide bond formation. It has been suggested to have peptidyltransferase activity; this is somewhat controversial. Makes several contacts with the 16S rRNA in the 70S ribosome. This Treponema pallidum (strain Nichols) protein is Large ribosomal subunit protein uL2.